We begin with the raw amino-acid sequence, 276 residues long: Undecaprenyl-diphosphatase (276 aa).

The next 7 helical transmembrane spans lie at 46-66, 94-114, 122-142, 152-172, 196-216, 226-246, and 253-273; these read AGASFAAVIQLGSLGAVLIYF, LMGILVGTLPIVIAGWAVKAI, LWVVAAAAIGLALALGWAERV, LGIGDGLWVGLAQALALIPGV, SFLLGIPALFLAGVAEFIAEF, LGTLSAFVFSYGSIDWLIRFL, and VFIVYRIGFGLFIFLGLALGF.

It belongs to the UppP family.

It is found in the cell inner membrane. It carries out the reaction di-trans,octa-cis-undecaprenyl diphosphate + H2O = di-trans,octa-cis-undecaprenyl phosphate + phosphate + H(+). Functionally, catalyzes the dephosphorylation of undecaprenyl diphosphate (UPP). Confers resistance to bacitracin. The chain is Undecaprenyl-diphosphatase from Synechococcus sp. (strain JA-3-3Ab) (Cyanobacteria bacterium Yellowstone A-Prime).